The following is a 79-amino-acid chain: Large ribosomal subunit protein uL29 (79 aa).

The protein belongs to the universal ribosomal protein uL29 family.

This is Large ribosomal subunit protein uL29 from Tropheryma whipplei (strain TW08/27) (Whipple's bacillus).